We begin with the raw amino-acid sequence, 2123 residues long: Bromodomain adjacent to zinc finger domain protein 2B (2123 aa).

Disordered regions lie at residues 1-129 (MESG…VNGT), 144-306 (TPAS…LSQQ), 357-402 (PSPD…EMGK), 473-534 (NENV…HPHP), 546-691 (RGTD…RRVA), 756-793 (RAMDGRRGRPPNPDRPRAREESRMKRRKGRPPNVGSAE), and 937-960 (ARKKAEEKERLKQEKRDEKRLNKE). A compositionally biased stretch (low complexity) spans 7 to 46 (LPSSPASSTTPTSSSAPSVASAVSKSSLSTGAASLSSTAS). Residues 83–95 (FFPPLLGIPPLFA) show a composition bias toward pro residues. Polar residues predominate over residues 100–116 (NHDSSFHSRTSGKSSRN). Low complexity-rich tracts occupy residues 147–157 (SSSMGQNQSTS) and 193–216 (ESSSNSDSDSGTSSDTSSEGISSS). The span at 217–243 (DSDDLEEEEEEDQSVEESEDDDSDSET) shows a compositional bias: acidic residues. Positions 259 to 277 (SDPKTDGQKATEKAQERRT) are enriched in basic and acidic residues. 2 stretches are compositionally biased toward low complexity: residues 291–306 (PPFQSQQKQPQVLSQQ) and 366–379 (NKNTSEESSSLTSE). Residues 473–502 (NENVSSSTPFSSPVNLSTSGRRAPGSQTPA) show a composition bias toward polar residues. Residues 546–559 (RGTDSDVPSSKDSE) show a composition bias toward basic and acidic residues. The span at 560 to 587 (DSNEDEEEDDEEEDEEDDEDDESDDSQS) shows a compositional bias: acidic residues. Positions 588–597 (ESDSNSQSDS) are enriched in low complexity. Positions 598–615 (EGSEDDEEKDQEESDSDT) are enriched in acidic residues. Low complexity-rich tracts occupy residues 628–637 (SSSAKSPPSS) and 671–683 (TSSSTLTSTPHSG). The MBD domain occupies 690–765 (VADDQELRIP…RAMDGRRGRP (76 aa)). Residues 756–778 (RAMDGRRGRPPNPDRPRAREESR) are compositionally biased toward basic and acidic residues. Residues 1004–1069 (GTTFSDCLMV…LSAAVCDPGL (66 aa)) enclose the DDT domain. Disordered stretches follow at residues 1183–1260 (RDAS…QTAS), 1396–1444 (PPES…KTDA), 1499–1526 (TLVTPQSQPPSKSPSPAPAALLGPSSVQ), and 1588–1614 (FLTSSVASSKSDSPVPPAERPSSAQPV). A compositionally biased stretch (acidic residues) spans 1214–1238 (SDYDDDDDDDSDDQADEDEEDEEDK). Residues 1239-1248 (DDKKGKKTDI) show a composition bias toward basic and acidic residues. Positions 1254–1281 (EGDQTASVEELEKQIEKLSKQQSQYRRK) form a coiled coil. Polar residues-rich tracts occupy residues 1408 to 1422 (NVSTNGGPLSHQNSG) and 1430 to 1444 (PSATTAQSPVGKTDA). Residues 1505–1515 (SQPPSKSPSPA) are compositionally biased toward pro residues. The segment covering 1588–1600 (FLTSSVASSKSDS) has biased composition (low complexity). Residues 1886 to 1936 (KVYCQICRKGDNEELLLLCDGCDKGCHTYCHRPKITTIPDGDWFCPACISK) form a PHD-type zinc finger. The disordered stretch occupies residues 1949 to 2013 (VKGKKTNDSK…AESTTSIKKP (65 aa)). Basic and acidic residues predominate over residues 1984–1995 (GSKELKKRKMEE). A compositionally biased stretch (polar residues) spans 1996 to 2010 (TTSLNLSKAESTTSI). One can recognise a Bromo domain in the interval 2015 to 2119 (KDESRDLALC…KYFEKKWTDT (105 aa)).

Belongs to the WAL family. As to quaternary structure, component of the BRF-1 ISWI chromatin remodeling complex, at least composed of SMARCA1 and BAZ2B, which regulates the spacing of histone octamers on the DNA template to facilitate access to DNA. Within the BRF-1 ISWI chromatin remodeling complex interacts with SMARCA1; the interaction is direct. Component of the BRF-5 ISWI chromatin remodeling complex, at least composed of SMARCA5/SNF2H and BAZ2B, which regulates the spacing of histone octamers on the DNA template to facilitate access to DNA. Within the BRF-5 ISWI chromatin remodeling complex interacts with SMARCA5/SNF2H; the interaction is direct. Interacts with acetylated lysine residues on histone H1.4, H2A, H2B, H3 and H4 (in vitro). Interacts with EHMT1.

It localises to the nucleus. Regulatory subunit of the ATP-dependent BRF-1 and BRF-5 ISWI chromatin remodeling complexes, which form ordered nucleosome arrays on chromatin and facilitate access to DNA during DNA-templated processes such as DNA replication, transcription, and repair. Both complexes regulate the spacing of nucleosomes along the chromatin and have the ability to slide mononucleosomes to the center of a DNA template. The BRF-1 ISWI chromatin remodeling complex has a lower ATP hydrolysis rate than the BRF-5 ISWI chromatin remodeling complex. Chromatin reader protein, involved in positively modulating the rate of age-related behavioral deterioration. Represses the expression of mitochondrial function-related genes, perhaps by occupying their promoter regions, working in concert with histone methyltransferase EHMT1. The chain is Bromodomain adjacent to zinc finger domain protein 2B from Mus musculus (Mouse).